The sequence spans 5762 residues: Mucin-5B (5762 aa).

The signal sequence occupies residues 1 to 25 (MGAPSACRTLVLALAAMLVVPQAET). Positions 27–50 (GPVEPSWENAGHTMDGGAPTSSPT) are disordered. The VWFD 1 domain maps to 75 to 245 (RVCSTWGDFH…KLDGPTEQCP (171 aa)). 2 disulfides stabilise this stretch: C77-C207 and C99-C244. N-linked (GlcNAc...) asparagine glycosylation is present at N145. Residue E194 coordinates Cu(2+). Residues N201 and N254 are each glycosylated (N-linked (GlcNAc...) asparagine). 2 residues coordinate Cu(2+): H311 and H358. The 57-residue stretch at 329–385 (CPLNMQHQECGSPCTDTCSNPQRAQLCEDHCVDGCFCPPGTVLDDITHSGCLPLGQC) folds into the TIL 1 domain. N401 carries an N-linked (GlcNAc...) asparagine glycan. A VWFD 2 domain is found at 423–598 (GTCSVQGGAH…NTWKAQAACA (176 aa)). Cystine bridges form between C425/C562, C447/C597, and C469/C477. The N-linked (GlcNAc...) asparagine glycan is linked to N515. TIL domains follow at residues 695–752 (CPKS…AQEC) and 805–855 (NSSA…EEDC). Residue N805 is glycosylated (N-linked (GlcNAc...) asparagine). The VWFC 1 domain occupies 855–927 (CPCVHNEATY…EYILAQDYCG (73 aa)). A VWFD 3 domain is found at 893–1062 (GTCVAYGDGH…NSWKLSPSCP (170 aa)). Disulfide bonds link C895-C1026, C917-C1061, C926-C1023, and C944-C951. An N-linked (GlcNAc...) asparagine glycan is attached at N929. N-linked (GlcNAc...) asparagine glycosylation is found at N1276 and N1292. One copy of the Cys-rich subdomain 1 repeat lies at 1333-1432 (CVREVCRWSS…RVLCCEYVPC (100 aa)). The tract at residues 1333-4228 (CVREVCRWSS…RVFCCNYGHC (2896 aa)) is 7 X Cys-rich subdomain repeats. W1340 carries a C-linked (Man) tryptophan glycan. Disordered stretches follow at residues 1437-1462 (APGTSPQPSLSASTEPAVPTPTQTTA) and 1480-1502 (LTSQTGSSSGPVTVTPSAPGTTT). Low complexity predominate over residues 1450–1462 (TEPAVPTPTQTTA). The stretch at 1503–1604 (CQPRCQWTEW…VLCCSDDHCR (102 aa)) is one Cys-rich subdomain 2 repeat. W1509 carries a C-linked (Man) tryptophan glycan. N-linked (GlcNAc...) asparagine glycosylation occurs at N1556. The disordered stretch occupies residues 1607–1783 (ATTPPPTTEL…NTTTSQGTTR (177 aa)). The segment covering 1614–1624 (TELETATTTTT) has biased composition (low complexity). 2 stretches are compositionally biased toward polar residues: residues 1625–1638 (QALFSTPQPTSSPG) and 1645–1662 (ASTTAVPTLSEGLTSPRY). Residues 1663–1684 (TSTLGTATTGGPTTPAGSTEPT) show a composition bias toward low complexity. The segment covering 1689 to 1706 (ATSTLPTRSALPGTTGSL) has biased composition (polar residues). Composition is skewed to low complexity over residues 1739 to 1756 (EPLTTSLAPTLTSELSTS) and 1765 to 1777 (TETTMSPLTNTTT). N1774 carries N-linked (GlcNAc...) asparagine glycosylation. One copy of the Cys-rich subdomain 3 repeat lies at 1784–1885 (CQPKCEWTEW…VLCCDDYSHC (102 aa)). C-linked (Man) tryptophan glycosylation occurs at W1790. Low complexity predominate over residues 1890–1987 (ATSSTATPSS…TSVTPIPSSS (98 aa)). Disordered stretches follow at residues 1890 to 2019 (ATSS…TAHT), 2031 to 2100 (GATG…GTTH), 2114 to 2211 (TGSM…HTVR), and 2242 to 2302 (TGTT…SSPT). The 11 X approximate tandem repeats, Ser/Thr-rich stretch occupies residues 1890 to 2199 (ATSSTATPSS…VPNTMATTHG (310 aa)). A compositionally biased stretch (polar residues) spans 1988 to 1997 (LGTTWTRLSQ). Over residues 1998-2019 (TTTPTATMSTATPSSTPETAHT) the composition is skewed to low complexity. A compositionally biased stretch (low complexity) spans 2114–2181 (TGSMATPSSS…TSNTVTPSSA (68 aa)). Positions 2182–2199 (LGTTHTPPVPNTMATTHG) are enriched in polar residues. One copy of the Cys-rich subdomain 4 repeat lies at 2313 to 2414 (GCEPQCAWSE…RVFCCNYGHC (102 aa)). W2320 carries C-linked (Man) tryptophan glycosylation. Residues 2419-2756 (ATSSTAMPSS…VPNTTATTHG (338 aa)) form an 11 X approximate tandem repeats, Ser/Thr-rich region. Disordered stretches follow at residues 2443–2462 (ATTTESTGSTATPSSTPGTT), 2473–2522 (TVTV…ATAL), and 2556–2861 (TTPT…PTSA). A compositionally biased stretch (low complexity) spans 2556–2738 (TTPTATMSTA…TSSTVTPSSA (183 aa)). Polar residues predominate over residues 2739–2786 (LGTTHTPPVPNTTATTHGRSLSPSSPHTVRTAWTSATSGTLGTTHITE). Residue N2749 is glycosylated (N-linked (GlcNAc...) asparagine). A compositionally biased stretch (low complexity) spans 2787-2861 (PSTGTSHTPA…TLLPSSPTSA (75 aa)). The stretch at 2854 to 2886 (LPSSPTSAPITTVVTMGCEPQCAWSEWLDYSYP) is one HAT 1 repeat. One copy of the Cys-rich subdomain 5 repeat lies at 2871 to 2971 (CEPQCAWSEW…RVFCCNYGHC (101 aa)). C-linked (Man) tryptophan glycosylation occurs at W2877. The interval 2976 to 3456 (ATSSTATPSS…VPNTTATTHG (481 aa)) is 17 X approximate tandem repeats, Ser/Thr-rich. Composition is skewed to low complexity over residues 3001-3017 (TTTATTGSTAIPSSTPG) and 3026-3049 (TSTATTPTATSSKATSSSSPRTAT). Disordered stretches follow at residues 3001–3049 (TTTA…RTAT), 3256–3357 (TTPT…GTTH), 3371–3469 (TGSM…TVRT), and 3481–3561 (TTHI…PTSA). Positions 3371–3438 (TGSMATPSSS…TSSTVTPSSA (68 aa)) are enriched in low complexity. The span at 3439 to 3456 (LGTTHTPPVPNTTATTHG) shows a compositional bias: polar residues. N-linked (GlcNAc...) asparagine glycosylation is present at N3449. The span at 3487 to 3561 (PSTVTSHTPA…TLLPSSPTSA (75 aa)) shows a compositional bias: low complexity. An HAT 2 repeat occupies 3554–3586 (LPSSPTSAPITTVVTTGCEPQCAWSEWLDYSYP). The stretch at 3571–3671 (CEPQCAWSEW…RVFCCNYGHC (101 aa)) is one Cys-rich subdomain 6 repeat. W3577 is a glycosylation site (C-linked (Man) tryptophan). Positions 3676–4013 (ATSSTATPSS…VPNTTATTHG (338 aa)) are 11 X approximate tandem repeats, Ser/Thr-rich. 3 disordered regions span residues 3699-3779 (TATT…ATAL), 3813-3917 (TTPT…HTPT), and 3956-4118 (ATGS…PTSA). A compositionally biased stretch (low complexity) spans 3956-3995 (ATGSTTNPSSTPGTTPIPPVLTTTATTPAATSSTVTPSSA). Residues 3996–4043 (LGTTHTPPVPNTTATTHGRSLSPSSPHTVRTAWTSATSGTLGTTHITE) show a composition bias toward polar residues. N4006 carries an N-linked (GlcNAc...) asparagine glycan. Residues 4044-4118 (PSTGTSHTPA…TLLPSSPTSA (75 aa)) show a composition bias toward low complexity. The stretch at 4111-4143 (LPSSPTSAPITTVVTTGCEPQCAWSEWLDYSYP) is one HAT 3 repeat. Residues 4128-4228 (CEPQCAWSEW…RVFCCNYGHC (101 aa)) form a Cys-rich subdomain 7 repeat. C-linked (Man) tryptophan glycosylation occurs at W4134. The 23 X approximate tandem repeats, Ser/Thr-rich stretch occupies residues 4233 to 4879 (ATSSTAMPSS…TLGTAHTPKV (647 aa)). Low complexity-rich tracts occupy residues 4259–4274 (TTASTGSTATPSSTPG) and 4283–4389 (TSPA…PGTT). 4 disordered regions span residues 4259-4389 (TTAS…PGTT), 4428-4447 (ATTTASTGSTATPSSTPGTT), 4458-4527 (TVTV…AIPS), and 4541-4750 (TTPT…ATSF). N-linked (GlcNAc...) asparagine glycosylation is found at N4804, N4960, N5017, N5024, N5046, N5096, and N5111. A VWFD 4 domain is found at 5073–5261 (CICSMWGGSH…VPDSRKDGCW (189 aa)). Cystine bridges form between C5075-C5221, C5097-C5260, and C5121-C5132. N-linked (GlcNAc...) asparagine glycosylation is present at N5215. One can recognise a VWFC 2 domain in the interval 5412-5484 (CPCVGPDGFP…NPCCPETVCV (73 aa)). N5486, N5526, N5565, N5566, N5602, N5612, N5663, N5677, and N5721 each carry an N-linked (GlcNAc...) asparagine glycan. The VWFC 3 domain occupies 5521–5587 (QLCSYNGTFY…VAGQCCGECV (67 aa)). 4 disulfides stabilise this stretch: C5653/C5705, C5672/C5719, C5681/C5735, and C5685/C5737. The region spanning 5653–5742 (CEEDSCQVRI…DECGCTPFCV (90 aa)) is the CTCK domain.

Homomultimer; disulfide-linked. The N- and C-terminus mediate their assembly into higher order structures to form filaments. The CTCK domains of two polypeptides associate in the endoplasmic reticulum to generate intermolecularly disulfide-bonded dimers. These dimers progress to the Golgi apparatus, which is a more acidic environment than the endoplasmic reticulum. Under acidic conditions, the N-termini form non-covalent intermolecular interactions that juxtapose assemblies from different CTCK-linked dimers to produce long, disulfide-linked polymers that remain highly compact until secretion. In terms of processing, highly glycosylated. C-, N- and O-glycosylated. C-mannosylated in the Cys-rich subdomains probably on the first Trp residue of the WXXW motif. Highly O-glycosylated in the Ser/Thr-rich tandem repeat (TR) region. The repeat region is about 59% O-glycosylated with a high abundance of NeuAc(2)Hex(1)HexNac1-ol. As to expression, expressed on surface airway epithelia. Expressed mainly in mucous cells of submucosal glands of airway tissues. Highly expressed in the sublingual gland. Also found in submaxillary glands, endocervix, gall bladder, and pancreas.

The protein localises to the secreted. Its function is as follows. Gel-forming mucin that is thought to contribute to the lubricating and viscoelastic properties of whole saliva and cervical mucus. The sequence is that of Mucin-5B (MUC5B) from Homo sapiens (Human).